Reading from the N-terminus, the 75-residue chain is Small capsomere-interacting protein (75 aa).

This sequence belongs to the herpesviridae small capsomere-interacting protein family. Interacts with the major capsid protein/MCP.

The protein resides in the virion. Its subcellular location is the host nucleus. In terms of biological role, participates in the assembly of the infectious particles by decorating the outer surface of the capsid shell and thus forming a layer between the capsid and the tegument. Complexes composed of the capsid protein VP5 and UL48A assemble together in the host cytoplasm and are translocated to the nucleus, where they accumulate and participate in capsid assembly. Its function is as follows. Participates in the assembly of the infectious particles by decorating the outer surface of the capsid shell and thus forming a layer between the capsid and the tegument. Complexes composed of the major capsid protein and small capsomere-interacting protein/SCP assemble together in the host cytoplasm and are translocated to the nucleus, where they accumulate and participate in capsid assembly. The chain is Small capsomere-interacting protein from Homo sapiens (Human).